We begin with the raw amino-acid sequence, 261 residues long: Protein STAY-GREEN, chloroplastic (261 aa).

Residues 1–54 (MDTLTSAPLLTTKFKPSFSPQQKPCFPHRRRFENGKKNQSIVPVARLFGPAIFE) constitute a chloroplast transit peptide.

Belongs to the staygreen family.

The protein localises to the plastid. The protein resides in the chloroplast. Functionally, probably involved in the disassembling mechanism of the intact light-harvesting complex of photosystem II (LHCII) in the thylakoid membranes. Required for the chlorophyll breakdown pathway. Acts independent and upstream of pheophorbide a oxygenase (PAO). The protein is Protein STAY-GREEN, chloroplastic (SGR) of Pisum sativum (Garden pea).